The primary structure comprises 401 residues: Phosphoglycerate kinase, cytosolic (401 aa).

The (2R)-3-phosphoglycerate site is built by Val24, Asp25, Asn27, Arg41, Ser63, His64, Gly66, Arg67, Arg122, His154, and Arg155. Gly200 serves as a coordination point for ADP. Position 200 (Gly200) interacts with CDP. Residues Lys202 and Lys206 each contribute to the AMP site. Lys206 is a binding site for ATP. Gly224 serves as a coordination point for ADP. Gly224 serves as a coordination point for CDP. AMP is bound by residues Gly225 and Gly297. ATP-binding residues include Gly225 and Gly297. CDP contacts are provided by Gly322 and Phe327. Phe327 serves as a coordination point for ADP. Position 328 (Glu328) interacts with AMP. Positions 328, 359, and 360 each coordinate ATP. Asp359 lines the Mg(2+) pocket.

It belongs to the phosphoglycerate kinase family. In terms of assembly, monomer. The cofactor is Mg(2+).

The protein resides in the cytoplasm. The catalysed reaction is (2R)-3-phosphoglycerate + ATP = (2R)-3-phospho-glyceroyl phosphate + ADP. It functions in the pathway carbohydrate degradation; glycolysis; pyruvate from D-glyceraldehyde 3-phosphate: step 2/5. The protein is Phosphoglycerate kinase, cytosolic of Nicotiana tabacum (Common tobacco).